Reading from the N-terminus, the 239-residue chain is Ribonuclease 3 (239 aa).

One can recognise an RNase III domain in the interval Ile-12 to Gly-137. Glu-50 contacts Mg(2+). Asp-54 is an active-site residue. Mg(2+) contacts are provided by Asp-123 and Glu-126. Residue Glu-126 is part of the active site. The 70-residue stretch at Asp-162–Val-231 folds into the DRBM domain.

Belongs to the ribonuclease III family. As to quaternary structure, homodimer. It depends on Mg(2+) as a cofactor.

It localises to the cytoplasm. The catalysed reaction is Endonucleolytic cleavage to 5'-phosphomonoester.. Functionally, digests double-stranded RNA. Involved in the processing of primary rRNA transcript to yield the immediate precursors to the large and small rRNAs (23S and 16S). Processes some mRNAs, and tRNAs when they are encoded in the rRNA operon. Processes pre-crRNA and tracrRNA of type II CRISPR loci if present in the organism. This is Ribonuclease 3 from Agrobacterium fabrum (strain C58 / ATCC 33970) (Agrobacterium tumefaciens (strain C58)).